Here is a 292-residue protein sequence, read N- to C-terminus: E3 ubiquitin-protein ligase trim-21 (292 aa).

An RING-type zinc finger spans residues Cys6–Arg52. The B box-type zinc finger occupies Asn90–Leu137. Residues Cys95, His98, Cys123, and His129 each coordinate Zn(2+). The stretch at Ile152–Leu179 forms a coiled coil.

This sequence belongs to the TRIM/RBCC family. As to quaternary structure, interacts with E2 ubiquitin-conjugating enzyme ubc-21. Interacts with ced-6; this mediates interaction of trim-21 with ced-1 and is required for ced-1 ubiquitination. Interacts with nck-1; the interaction is required for ced-1 ubiquitination. As to expression, in early larva, observed mainly in pharyngeal and body wall muscle cells.

It localises to the cytoplasm. It catalyses the reaction S-ubiquitinyl-[E2 ubiquitin-conjugating enzyme]-L-cysteine + [acceptor protein]-L-lysine = [E2 ubiquitin-conjugating enzyme]-L-cysteine + N(6)-ubiquitinyl-[acceptor protein]-L-lysine.. The protein operates within protein modification; protein ubiquitination. Its function is as follows. E3 ubiquitin-protein ligase which catalyzes 'Lys-48'-linked polyubiquitination of ced-1, promoting its proteasomal degradation to maintain appropriate ced-1 levels for apoptotic cell clearance. Acts together with E2 ubiquitin-conjugating enzyme ubc-21. In Caenorhabditis elegans, this protein is E3 ubiquitin-protein ligase trim-21.